The chain runs to 213 residues: ATP phosphoribosyltransferase (213 aa).

This sequence belongs to the ATP phosphoribosyltransferase family. Short subfamily. In terms of assembly, heteromultimer composed of HisG and HisZ subunits.

The protein resides in the cytoplasm. The enzyme catalyses 1-(5-phospho-beta-D-ribosyl)-ATP + diphosphate = 5-phospho-alpha-D-ribose 1-diphosphate + ATP. It functions in the pathway amino-acid biosynthesis; L-histidine biosynthesis; L-histidine from 5-phospho-alpha-D-ribose 1-diphosphate: step 1/9. In terms of biological role, catalyzes the condensation of ATP and 5-phosphoribose 1-diphosphate to form N'-(5'-phosphoribosyl)-ATP (PR-ATP). Has a crucial role in the pathway because the rate of histidine biosynthesis seems to be controlled primarily by regulation of HisG enzymatic activity. The sequence is that of ATP phosphoribosyltransferase from Listeria welshimeri serovar 6b (strain ATCC 35897 / DSM 20650 / CCUG 15529 / CIP 8149 / NCTC 11857 / SLCC 5334 / V8).